The following is a 206-amino-acid chain: Thymidylate kinase (206 aa).

10–17 (GIDGAGKS) is an ATP binding site.

Belongs to the thymidylate kinase family.

The enzyme catalyses dTMP + ATP = dTDP + ADP. Functionally, phosphorylation of dTMP to form dTDP in both de novo and salvage pathways of dTTP synthesis. The chain is Thymidylate kinase (tmk) from Neisseria meningitidis serogroup B (strain ATCC BAA-335 / MC58).